Reading from the N-terminus, the 92-residue chain is NELL2-interacting cell ontogeny regulator 1 (92 aa).

An N-terminal signal peptide occupies residues 1–30; it reads MALPSAWSVMRVVIPFISVLGLLGVRLVGA.

It belongs to the NICOL family.

It localises to the secreted. The protein resides in the cytoplasm. The protein localises to the perinuclear region. In terms of biological role, mRNA-binding protein which interacts with a range of target mRNAs and may promote extracellular matrix production. May function as a component of lumicrine signaling and may play a crucial role in epididymal-mediated sperm maturation and male fertility. This is NELL2-interacting cell ontogeny regulator 1 from Gallus gallus (Chicken).